A 310-amino-acid chain; its full sequence is Olfactory receptor 5AR1 (310 aa).

Over 1 to 25 the chain is Extracellular; sequence MDKENHSVVTEFVFMGITQDPQLQI. Residue asparagine 5 is glycosylated (N-linked (GlcNAc...) asparagine). The chain crosses the membrane as a helical span at residues 26–46; the sequence is IFFVVFLLVYLVNVIGNVGMI. The Cytoplasmic portion of the chain corresponds to 47–54; the sequence is ILIITDSQ. A helical transmembrane segment spans residues 55-75; the sequence is LHTPMYFFLCNLSFVDLGYSS. Residues 76–99 lie on the Extracellular side of the membrane; sequence AIAPRMLADFLTKHKVISFSSCAT. A disulfide bridge connects residues cysteine 97 and cysteine 189. The helical transmembrane segment at 100–120 threads the bilayer; it reads QFAFFVGFVDAECYVLAAMAY. Topologically, residues 121-133 are cytoplasmic; sequence DRFVAICRPLHYS. The helical transmembrane segment at 134–154 threads the bilayer; sequence TLMSKKVCLVLMLGSYFAGLV. Topologically, residues 155–196 are extracellular; it reads SLVAHTSLTFSLSYCGSNIINHFFCEIPPLLALSCSDTYISE. A helical transmembrane segment spans residues 197 to 217; it reads ILLFSLCGFIEFSTILIIFIS. Cu cation is bound at residue cysteine 203. Topologically, residues 218-237 are cytoplasmic; that stretch reads YAFILIAIIRIRSAEGRLKA. A helical transmembrane segment spans residues 238–258; that stretch reads FSTCGSHLTGVTLFYGTVMFM. Positions 256 and 261 each coordinate Cu cation. Residues 259-271 are Extracellular-facing; it reads YLRPTSSYSLDQD. Residues 272–292 form a helical membrane-spanning segment; sequence KWASVFYTIIIPMLNPLIYSL. Residues 293-310 lie on the Cytoplasmic side of the membrane; the sequence is RNKDVKAAFKKLIGKKPQ.

This sequence belongs to the G-protein coupled receptor 1 family.

The protein localises to the cell membrane. Its activity is regulated as follows. Copper binding enhances receptor activity in response to odorant binding. Functionally, olfactory receptor that is activated by the binding of organosulfur odorants with thioether groups such as (methylthio)methanethiol (MTMT). The activity of this receptor is mediated by G proteins which activate adenylyl cyclase. The chain is Olfactory receptor 5AR1 from Mus musculus (Mouse).